The chain runs to 429 residues: Glutamyl-tRNA reductase (429 aa).

Substrate is bound by residues 50–53 (TCNR), S108, 113–115 (EPQ), and Q119. The active-site Nucleophile is C51. 188-193 (GAGEMI) serves as a coordination point for NADP(+).

Belongs to the glutamyl-tRNA reductase family. As to quaternary structure, homodimer.

The enzyme catalyses (S)-4-amino-5-oxopentanoate + tRNA(Glu) + NADP(+) = L-glutamyl-tRNA(Glu) + NADPH + H(+). Its pathway is porphyrin-containing compound metabolism; protoporphyrin-IX biosynthesis; 5-aminolevulinate from L-glutamyl-tRNA(Glu): step 1/2. Functionally, catalyzes the NADPH-dependent reduction of glutamyl-tRNA(Glu) to glutamate 1-semialdehyde (GSA). The sequence is that of Glutamyl-tRNA reductase from Polaromonas naphthalenivorans (strain CJ2).